The chain runs to 510 residues: NAD(P)H-quinone oxidoreductase subunit 2, chloroplastic (510 aa).

11 consecutive transmembrane segments (helical) span residues 24 to 44 (LLLFHGSFIFPECILIFGLIL), 59 to 79 (WFYFISSTSLVMSITALLFRW), 99 to 119 (IFQFLILLCSTLCIPLSVEYI), 124 to 144 (MAITEFLLFVLTATLGGMFLC), 149 to 169 (LITIFVAPECFSLCSYLLSGY), 183 to 203 (YLLMGGASSSILVHGFSWLYG), 295 to 315 (WHLLLEILAILSMILGNLIAI), 323 to 343 (MLAYSSIGQIGYVIIGIIVGD), 347 to 367 (GYASMITYMLFYISMNLGTFA), 395 to 415 (ALSSALCLLSLGGLPPLAGFF), and 418 to 438 (LYLFWCGWQAGLYFLVSIGLL).

The protein belongs to the complex I subunit 2 family. As to quaternary structure, NDH is composed of at least 16 different subunits, 5 of which are encoded in the nucleus.

It localises to the plastid. Its subcellular location is the chloroplast thylakoid membrane. The catalysed reaction is a plastoquinone + NADH + (n+1) H(+)(in) = a plastoquinol + NAD(+) + n H(+)(out). It catalyses the reaction a plastoquinone + NADPH + (n+1) H(+)(in) = a plastoquinol + NADP(+) + n H(+)(out). Its function is as follows. NDH shuttles electrons from NAD(P)H:plastoquinone, via FMN and iron-sulfur (Fe-S) centers, to quinones in the photosynthetic chain and possibly in a chloroplast respiratory chain. The immediate electron acceptor for the enzyme in this species is believed to be plastoquinone. Couples the redox reaction to proton translocation, and thus conserves the redox energy in a proton gradient. In Asparagus officinalis (Garden asparagus), this protein is NAD(P)H-quinone oxidoreductase subunit 2, chloroplastic.